Consider the following 2399-residue polypeptide: Norsolorinic acid synthase (2399 aa).

Positions 10-247 (LVFGDQTYDF…RQIPIYVPAH (238 aa)) are starter unit:ACP transacylase (SAT) domain. Positions 372-805 (KSKLAIVSMS…GGNTALLIED (434 aa)) constitute a Ketosynthase family 3 (KS3) domain. Residues Cys-544, His-679, and His-722 each act as for beta-ketoacyl synthase activity in the active site. Residues 905–1192 (FAFTGQGSQY…LCGMIKNILG (288 aa)) form a malonyl-CoA:ACP transacylase (MAT) domain region. Catalysis depends on Ser-995, which acts as the For acyl/malonyl transferase activity. The disordered stretch occupies residues 1307-1327 (VQEAPAAKTETKKMSKLDPTK). Residues 1315-1327 (TETKKMSKLDPTK) show a composition bias toward basic and acidic residues. Positions 1340-1483 (HKVIEEKTEP…CTVRFTTDSQ (144 aa)) are N-terminal hotdog fold. Residues 1340–1658 (HKVIEEKTEP…LRSVPRKALR (319 aa)) form the PKS/mFAS DH domain. Residues 1353 to 1658 (QFTVETDISR…LRSVPRKALR (306 aa)) are product template (PT) domain. The active-site Proton acceptor; for dehydratase activity is the His-1372. A C-terminal hotdog fold region spans residues 1510–1658 (LTHYNTKSGY…LRSVPRKALR (149 aa)). Catalysis depends on Asp-1570, which acts as the Proton donor; for dehydratase activity. The tract at residues 1665–1734 (MDKGIRQRGG…AALKASVPKA (70 aa)) is disordered. A compositionally biased stretch (low complexity) spans 1677-1698 (GAAKGAVAAPAPAKKMVEPVKA). Pro residues predominate over residues 1708 to 1723 (AAPPSPSKAAPPPAPK). The span at 1724-1734 (PAALKASVPKA) shows a compositional bias: low complexity. 3 Carrier domains span residues 1733–1812 (KADP…AGAA), 1877–1953 (SKVF…GGSG), and 2020–2099 (VART…TGSS). O-(pantetheine 4'-phosphoryl)serine occurs at positions 1770, 1911, and 2057. A compositionally biased stretch (low complexity) spans 2098 to 2115 (SSADSDSSSVASNPADPA). The tract at residues 2098–2149 (SSADSDSSSVASNPADPAATPPRSESSDTEPDDEAPSKPKSGPGSTDSCRST) is disordered. Residues 2140–2149 (PGSTDSCRST) show a composition bias toward polar residues. Positions 2164–2393 (TLFLLPDGGG…KARVNYVSDL (230 aa)) are thioesterase/Claisen cyclase (TE/CLC) domain. Residue Ser-2234 is the For thioesterase activity of the active site.

Pantetheine 4'-phosphate serves as cofactor.

The enzyme catalyses hexanoyl-[ACP] + 7 malonyl-CoA + 6 H(+) = noranthrone + holo-[ACP] + 7 CO2 + 7 CoA + 2 H2O. It participates in mycotoxin biosynthesis. Its function is as follows. Polyketide synthase; part of the fragmented gene cluster that mediates the biosynthesis of dothistromin (DOTH), a polyketide toxin very similar in structure to the aflatoxin precursor, versicolorin B. The first step of the pathway is the conversion of acetate to norsolorinic acid (NOR) and requires the fatty acid synthase subunits hexA and hexB, as well as the polyketide synthase pksA. PksA combines a hexanoyl starter unit and 7 malonyl-CoA extender units to synthesize the precursor NOR. The hexanoyl starter unit is provided to the acyl-carrier protein (ACP) domain by the fungal fatty acid synthase hexA/hexB. The second step is the conversion of NOR to averantin (AVN) and requires the norsolorinic acid ketoreductase nor1, which catalyzes the dehydration of norsolorinic acid to form (1'S)-averantin. The cytochrome P450 monooxygenase avnA then catalyzes the hydroxylation of AVN to 5'hydroxyaverantin (HAVN). The next step is performed by adhA that transforms HAVN to averufin (AVF). Averufin might then be converted to hydroxyversicolorone by cypX and avfA. Hydroxyversicolorone is further converted versiconal hemiacetal acetate (VHA) by moxY. VHA is then the substrate for the versiconal hemiacetal acetate esterase est1 to yield versiconal (VAL). Versicolorin B synthase vbsA then converts VAL to versicolorin B (VERB) by closing the bisfuran ring. Then, the activity of the versicolorin B desaturase verB leads to versicolorin A (VERA). DotB, a predicted chloroperoxidase, may perform epoxidation of the A-ring of VERA. Alternatively, a cytochrome P450, such as cypX or avnA could catalyze this step. It is also possible that another, uncharacterized, cytochrome P450 enzyme is responsible for this step. Opening of the epoxide could potentially be achieved by the epoxide hydrolase epoA. However, epoA seems not to be required for DOTH biosynthesis, but other epoxide hydrolases may have the ability to complement this hydrolysis. Alternatively, opening of the epoxide ring could be achieved non-enzymatically. The next step is the deoxygenation of ring A to yield the 5,8-dihydroxyanthraquinone which is most likely catalyzed by the NADPH dehydrogenase encoded by ver1. The last stages of DOTH biosynthesis are proposed to involve hydroxylation of the bisfuran. OrdB and norB might have oxidative roles here. An alternative possibility is that cytochrome P450 monoogenases such as avnA and cypX might perform these steps in addition to previously proposed steps. The sequence is that of Norsolorinic acid synthase from Dothistroma septosporum (Red band needle blight fungus).